The sequence spans 322 residues: Acetyl-coenzyme A carboxylase carboxyl transferase subunit alpha (322 aa).

The region spanning 30–293 is the CoA carboxyltransferase C-terminal domain; that stretch reads ALDISAEITR…RQALQESLRK (264 aa).

The protein belongs to the AccA family. As to quaternary structure, acetyl-CoA carboxylase is a heterohexamer composed of biotin carboxyl carrier protein (AccB), biotin carboxylase (AccC) and two subunits each of ACCase subunit alpha (AccA) and ACCase subunit beta (AccD).

The protein resides in the cytoplasm. It catalyses the reaction N(6)-carboxybiotinyl-L-lysyl-[protein] + acetyl-CoA = N(6)-biotinyl-L-lysyl-[protein] + malonyl-CoA. The protein operates within lipid metabolism; malonyl-CoA biosynthesis; malonyl-CoA from acetyl-CoA: step 1/1. In terms of biological role, component of the acetyl coenzyme A carboxylase (ACC) complex. First, biotin carboxylase catalyzes the carboxylation of biotin on its carrier protein (BCCP) and then the CO(2) group is transferred by the carboxyltransferase to acetyl-CoA to form malonyl-CoA. The protein is Acetyl-coenzyme A carboxylase carboxyl transferase subunit alpha of Nitrosomonas eutropha (strain DSM 101675 / C91 / Nm57).